Reading from the N-terminus, the 332-residue chain is MSKNGAADALKTFELENNIQTIDHDQLFKYDPQQYQQFLQSKPWSKDPHYFKHVKISAIALLKMVMHARSGGKLEVMGMLMGKVENNTMIIMDSFALPVEGTETRVNAQVEAYEYMVEYLELIKQTGRLENALGWYHSHPGYGCWLSGIDVGTQSVNQQYSEPWLGIVIDPTRTVSAGKVEIGAFRTYPQGYKPPNEGPSEYQSIPLSKIEDFGVHCKQYYSLEITYFKSSLDQQLLDKLWNKYWVNTLSSSPIFSNRDYITGQINDLSEKLEQAETQLSHSRSSILDKKKEESLLSKVSKDSSKVTIEQVQGIMSQVFKNSIFNECQTTKQ.

The region spanning 54–191 is the MPN domain; it reads VKISAIALLK…IGAFRTYPQG (138 aa). Residues His-137, His-139, and Asp-150 each coordinate Zn(2+). A JAMM motif motif is present at residues 137 to 150; it reads HSHPGYGCWLSGID.

It belongs to the peptidase M67A family. CSN5 subfamily. As to quaternary structure, component of the CSN complex. The holocomplex is comprised of 8 subunits csn1-8. In the complex, it probably interacts directly with csn1, csn2, csn3, csn4, csn6 and csn8. Requires a divalent metal cation as cofactor.

It localises to the cytoplasm. It is found in the nucleus. In terms of biological role, probable protease subunit of the COP9 signalosome complex (CSN), a complex involved in various cellular and developmental processes. The CSN complex is an essential regulator of the ubiquitin (Ubl) conjugation pathway by mediating the deneddylation of the cullin subunits of E3 ligasew complexes, leading to modify the Ubl ligase activity. In the complex, it probably acts as the catalytic center that mediates the cleavage of Nedd8 from cullins. Csn5 is essential for growth or survival. The protein is COP9 signalosome complex subunit 5 (csn5) of Dictyostelium discoideum (Social amoeba).